A 269-amino-acid chain; its full sequence is 5'-nucleotidase SurE (269 aa).

Positions 11, 12, 43, and 101 each coordinate a divalent metal cation.

It belongs to the SurE nucleotidase family. Requires a divalent metal cation as cofactor.

It localises to the cytoplasm. The catalysed reaction is a ribonucleoside 5'-phosphate + H2O = a ribonucleoside + phosphate. Functionally, nucleotidase that shows phosphatase activity on nucleoside 5'-monophosphates. The chain is 5'-nucleotidase SurE from Prochlorococcus marinus (strain MIT 9313).